A 237-amino-acid polypeptide reads, in one-letter code: MNRLSVPRFSVLIASLCGITLLSGCVAPTAKPNDPYYAPVLPRTPMSAAANNGAIYQAGFEQNLYGDRKAFRIGDIITITLSERMAASKAATSAMSKDSTNSIGLTSLFGSGLTTNNPIGGNDLSLNAGYNGARTTKGDGKAAQSNSLTGSVTVTVADVLPNGILAVRGEKWMTLNTGDELVRIAGLVRADDIATDNTVSSTRIADARITYSGTGAFADTSQPGWFDRFFLSPLFPF.

Positions 1–24 are cleaved as a signal peptide; sequence MNRLSVPRFSVLIASLCGITLLSG. A lipid anchor (N-palmitoyl cysteine) is attached at cysteine 25. Cysteine 25 is lipidated: S-diacylglycerol cysteine.

The protein belongs to the FlgH family. In terms of assembly, the basal body constitutes a major portion of the flagellar organelle and consists of four rings (L,P,S, and M) mounted on a central rod.

Its subcellular location is the cell outer membrane. The protein resides in the bacterial flagellum basal body. Assembles around the rod to form the L-ring and probably protects the motor/basal body from shearing forces during rotation. This is Flagellar L-ring protein from Pseudomonas syringae pv. syringae (strain B728a).